Reading from the N-terminus, the 1446-residue chain is Receptor-type tyrosine-protein phosphatase U (1446 aa).

The signal sequence occupies residues 1-18; that stretch reads MARAQALVLALTFQFCAP. Residues 19-749 lie on the Extracellular side of the membrane; it reads ETETPAAGCT…QRSEEMGLIL (731 aa). The MAM domain maps to 25–188; sequence AGCTFEEASD…ILLFSYPCAK (164 aa). N-linked (GlcNAc...) asparagine glycosylation occurs at Asn-75. The Ig-like C2-type domain occupies 190 to 275; sequence PHFSRLGDVE…SQAPRGAGVS (86 aa). Cys-210 and Cys-264 form a disulfide bridge. Fibronectin type-III domains are found at residues 288-383, 386-484, 485-591, and 592-668; these read PIAP…CAEP, APKG…TDED, VPGG…SAPS, and FDYA…FGAE. An N-linked (GlcNAc...) asparagine glycan is attached at Asn-410. Asn-685 carries N-linked (GlcNAc...) asparagine glycosylation. Residues 750-770 form a helical membrane-spanning segment; that stretch reads GICAGGLAVLILLLGAIIVII. Residues 771 to 887 form a mediates interaction with CTNNB1 region; it reads RKGRDRYAYS…DLLQHINQMK (117 aa). The Cytoplasmic portion of the chain corresponds to 771–1446; the sequence is RKGRDRYAYS…LEYLEALELR (676 aa). The interval 830–867 is disordered; sequence PGYSPRGDQRSGGVTEASSLLGGSPRRPCGRKGSPYHT. 3 positions are modified to phosphoserine: Ser-848, Ser-853, and Ser-863. Position 865 is a phosphotyrosine (Tyr-865). Tyrosine-protein phosphatase domains follow at residues 888–1144 and 1176–1439; these read TAEG…ILEA and LREE…ALEY. Residues Glu-1053, 1085-1091, and Gln-1129 contribute to the substrate site; that span reads CSAGTGR. The Phosphocysteine intermediate role is filled by Cys-1085. The active-site Phosphocysteine intermediate is Cys-1380.

This sequence belongs to the protein-tyrosine phosphatase family. Receptor class 2B subfamily. In terms of assembly, forms homooligomeric complexes which mediate cell homotypic adhesion. Interacts (via the cytoplasmic juxtamembrane domain) with CTNNB1; may mediate interaction with the cadherin/catenin adhesion complex. Interacts with KIT. May interact with AP3B1. Post-translationally, the extracellular domain is proteolytically processed through cleavage within the fibronectin type-III 4 domain. In addition to the 190 kDa full-length protein, proteolytic products of 100 kDa, 80 kDa and 73 kDa are observed. In terms of processing, N-glycosylated. Phosphorylated on tyrosine residues upon activation of KIT with stem cell factor (SCF). The 73 kDa proteolytic product is not phosphorylated. In terms of tissue distribution, transcripts of different sizes are differentially expressed in a subset of tissues. Detected in brain, lung, skeletal muscle, heart, kidney and placenta. In brain; expressed in olfactory bulb, cerebral cortex, hippocampus and cerebellum.

The protein resides in the cell junction. Its subcellular location is the cell membrane. It catalyses the reaction O-phospho-L-tyrosyl-[protein] + H2O = L-tyrosyl-[protein] + phosphate. In terms of biological role, tyrosine-protein phosphatase which dephosphorylates CTNNB1. Regulates CTNNB1 function both in cell adhesion and signaling. May function in cell proliferation and migration and play a role in the maintenance of epithelial integrity. May play a role in megakaryocytopoiesis. The polypeptide is Receptor-type tyrosine-protein phosphatase U (Ptpru) (Mus musculus (Mouse)).